Here is a 270-residue protein sequence, read N- to C-terminus: Pyrroline-5-carboxylate reductase (270 aa).

This sequence belongs to the pyrroline-5-carboxylate reductase family.

Its subcellular location is the cytoplasm. It catalyses the reaction L-proline + NADP(+) = (S)-1-pyrroline-5-carboxylate + NADPH + 2 H(+). It carries out the reaction L-proline + NAD(+) = (S)-1-pyrroline-5-carboxylate + NADH + 2 H(+). It participates in amino-acid biosynthesis; L-proline biosynthesis; L-proline from L-glutamate 5-semialdehyde: step 1/1. Catalyzes the reduction of 1-pyrroline-5-carboxylate (PCA) to L-proline. This chain is Pyrroline-5-carboxylate reductase, found in Methanosarcina acetivorans (strain ATCC 35395 / DSM 2834 / JCM 12185 / C2A).